A 259-amino-acid polypeptide reads, in one-letter code: 7-cyano-7-deazaguanine synthase (259 aa).

32-42 (LSGGLDSVTCL) lines the ATP pocket. Zn(2+) contacts are provided by C223, C233, C236, and C239.

It belongs to the QueC family. Zn(2+) is required as a cofactor.

It catalyses the reaction 7-carboxy-7-deazaguanine + NH4(+) + ATP = 7-cyano-7-deazaguanine + ADP + phosphate + H2O + H(+). It functions in the pathway purine metabolism; 7-cyano-7-deazaguanine biosynthesis. Functionally, catalyzes the ATP-dependent conversion of 7-carboxy-7-deazaguanine (CDG) to 7-cyano-7-deazaguanine (preQ(0)). This chain is 7-cyano-7-deazaguanine synthase, found in Psychrobacter cryohalolentis (strain ATCC BAA-1226 / DSM 17306 / VKM B-2378 / K5).